A 283-amino-acid chain; its full sequence is E3 ubiquitin-protein ligase MARCHF5 (283 aa).

The segment at 9–78 adopts an RING-CH-type zinc-finger fold; sequence VQQMLDRSCW…PQCNAEYLIV (70 aa). Zn(2+) contacts are provided by C17, C20, C36, C38, H46, C49, C68, and C71. 4 helical membrane passes run 102–122, 142–162, 212–232, and 241–261; these read FAAA…YGAV, PLFL…GKMI, ILCG…LMFS, and TILG…YFKQ.

Its subcellular location is the mitochondrion outer membrane. The protein resides in the endoplasmic reticulum membrane. It catalyses the reaction S-ubiquitinyl-[E2 ubiquitin-conjugating enzyme]-L-cysteine + [acceptor protein]-L-lysine = [E2 ubiquitin-conjugating enzyme]-L-cysteine + N(6)-ubiquitinyl-[acceptor protein]-L-lysine.. It participates in protein modification; protein ubiquitination. Functionally, mitochondrial E3 ubiquitin-protein ligase that plays a crucial role in the control of mitochondrial morphology by acting as a positive regulator of mitochondrial fission. May play a role in the prevention of cell senescence acting as a regulator of mitochondrial quality control. In Xenopus laevis (African clawed frog), this protein is E3 ubiquitin-protein ligase MARCHF5 (marchf5).